The following is a 215-amino-acid chain: Cytochrome b6 (215 aa).

The chain crosses the membrane as a helical span at residues Ile-32–Phe-52. Cys-35 contacts heme c. Heme b is bound by residues His-86 and His-100. Helical transmembrane passes span Ala-90–Phe-110, Leu-116–Tyr-136, and Leu-186–Ile-206. Heme b-binding residues include His-187 and His-202.

Belongs to the cytochrome b family. PetB subfamily. In terms of assembly, the 4 large subunits of the cytochrome b6-f complex are cytochrome b6, subunit IV (17 kDa polypeptide, PetD), cytochrome f and the Rieske protein, while the 4 small subunits are PetG, PetL, PetM and PetN. The complex functions as a dimer. Heme b serves as cofactor. It depends on heme c as a cofactor.

The protein localises to the plastid. Its subcellular location is the chloroplast thylakoid membrane. Its function is as follows. Component of the cytochrome b6-f complex, which mediates electron transfer between photosystem II (PSII) and photosystem I (PSI), cyclic electron flow around PSI, and state transitions. This chain is Cytochrome b6, found in Euglena gracilis.